A 33-amino-acid polypeptide reads, in one-letter code: Vejocalcin (33 aa).

3 cysteine pairs are disulfide-bonded: Cys3–Cys17, Cys10–Cys21, and Cys16–Cys32. The essential for stimulation of [3H]ryanodine binding to RYR1 stretch occupies residues 23–24 (RR).

Expressed by the venom gland.

It localises to the secreted. Functionally, this toxin stabilizes ryanodine receptor 1 (RyR1) opening in a long-lasting subconductance state (60% of the full conductance state). Furthermore, it triggers calcium release from sarcoplasmic vesicles (31 nM are enough to induce a sharp release, and 65% of the total calcium is released after toxin (100 nM) addition) probably by acting as a cell-penetrating peptide (CPP). In addition, it has been shown to dose-dependently stimulate ryanodine binding to RyR1 (EC(50)=3.7 nM). It also augments the bell-shaped calcium-[3H]ryanodine binding curve that is maximal at about 10 uM calcium concentration. It binds a different site as ryanodine. It acts synergistically with caffeine. In vivo, intracerebroventricular injection into mice induces neurotoxic symptoms, followed by death. This Vaejovis mexicanus (Mexican scorpion) protein is Vejocalcin.